The primary structure comprises 259 residues: uncharacterized protein (259 aa).

This sequence belongs to the ParA family.

This is an uncharacterized protein from Methanocaldococcus jannaschii (strain ATCC 43067 / DSM 2661 / JAL-1 / JCM 10045 / NBRC 100440) (Methanococcus jannaschii).